The primary structure comprises 137 residues: MANAASGMAVEDECKLKFLELKSKRNYRFIIFRIDGQQVVVEKLGNPDETYDDFTASLPANECRYAVFDFDFITDENCQKSKIFFIAWSPDSSRVRMKMVYASSKDRFKRELDGIQVELQATDPSEMSFDIIKSRAL.

Serine 6 carries the post-translational modification Phosphoserine. Residues 7–137 (GMAVEDECKL…SFDIIKSRAL (131 aa)) form the ADF-H domain.

This sequence belongs to the actin-binding proteins ADF family. As to expression, specifically expressed in pollen.

The protein resides in the cytoplasm. The protein localises to the cytoskeleton. In terms of biological role, actin-depolymerizing protein. Severs actin filaments (F-actin) and binds to actin monomers. Binds monomeric actin (G-actin) with a marked preference for the ADP-loaded form and inhibits the rate of nucleotide exchange on G-actin. Required for pollen tube growth. Promotes turnover of longitudinal actin cables by severing actin filaments in pollen tubes. The polypeptide is Actin-depolymerizing factor 7 (ADF7) (Arabidopsis thaliana (Mouse-ear cress)).